The primary structure comprises 563 residues: MSSNLSPTLNSGDKVKDGSIKEDRPYKIFFRDLFLFKENEMEAKKTEKLMNHNMKVYQKTTFSSRMKSRSYLSQLAFYPKRGGRSFEKFGPGPAPISRFLEGSDTKRTVHEFINDQRDRFLLEYALSTKRNTIKKFEKDIAMRERQLKKAEKKLQDDALAFEEFLRENDQRSVDALKLAAQETINKLQMTAELKKASMEVQAVKSEIAKTEFLLKEYMKYGFFLLQLSPKHWQIQQALKRAQASKSKANIILPKILARLSLHSSKKEGILEEFGGTAILSEDASRERDSQGKPSRILTRTSEKIKSNLTESFGSEDSLEFLLDDEMDFDLEPALYFKEPEELLQVLRELEEQNLTLFQYSQDVDENLEEVNKREKVIQDKTNSNIEFLLEQEEMLKANCVREEEKAAELQLRSRLFSFGEFNSDAQEILIDSLSKKITEVYKVCIGDAEDDGLNPIQKLVKVESRLVELCDLIESIPRENVEAIERMKQKERRQKFRDEKMREKQRHQEERLKAALEKAVAQPKKKLGRRLVYHSKPPSANKQQLPLVNETKTKAQEEEYFFT.

Coiled coils occupy residues 129–212 (KRNT…KTEF), 384–415 (NIEFLLEQEEMLKANCVREEEKAAELQLRSRL), and 485–522 (ERMKQKERRQKFRDEKMREKQRHQEERLKAALEKAVAQ). The disordered stretch occupies residues 521–550 (AQPKKKLGRRLVYHSKPPSANKQQLPLVNE). Residues 523–533 (PKKKLGRRLVY) show a composition bias toward basic residues.

As to quaternary structure, interacts with CCDC42, CFAP53, IFT88 and ODF2. Interacts with CCDC146. Interacts with TEKT3. Interacts with ubiquitinated histone H2A.

It is found in the cytoplasm. The protein localises to the cytoskeleton. The protein resides in the microtubule organizing center. It localises to the centrosome. Its subcellular location is the perinuclear region. It is found in the cell projection. The protein localises to the cilium. The protein resides in the flagellum. In terms of biological role, essential for male fertility. Required for sperm flagellum biogenesis. Also required for acrosome biogenesis. Required for the attachment of developing acrosomes to the nucleus during spermiogenesis and may be involved in the transport of fibrous sheath components. The sequence is that of Coiled-coil domain-containing protein 38 (CCDC38) from Macaca fascicularis (Crab-eating macaque).